Reading from the N-terminus, the 859-residue chain is Leucine--tRNA ligase (859 aa).

A 'HIGH' region motif is present at residues 42–52 (PYPSGRLHMGH). Residues 618-622 (KMSKS) carry the 'KMSKS' region motif. Lys621 contributes to the ATP binding site.

The protein belongs to the class-I aminoacyl-tRNA synthetase family.

It is found in the cytoplasm. The enzyme catalyses tRNA(Leu) + L-leucine + ATP = L-leucyl-tRNA(Leu) + AMP + diphosphate. This chain is Leucine--tRNA ligase, found in Shewanella baltica (strain OS185).